We begin with the raw amino-acid sequence, 227 residues long: Cytochrome c oxidase subunit 2 (227 aa).

Residues 1–26 (MATWSNLSIQDGASPLMEQLSFFHDD) lie on the Mitochondrial intermembrane side of the membrane. The helical transmembrane segment at 27–48 (HTMVVLLITVIVGYALSYMLFN) threads the bilayer. Residues 49–62 (AYTNRNMLHGHLIE) are Mitochondrial matrix-facing. The helical transmembrane segment at 63-82 (TIWTALPAITLIFIALPSLR) threads the bilayer. Residues 83 to 227 (LLYLLDDSVD…LFIKWLSKMI (145 aa)) lie on the Mitochondrial intermembrane side of the membrane. Residues His161, Cys196, Glu198, Cys200, His204, and Met207 each contribute to the Cu cation site. Glu198 serves as a coordination point for Mg(2+).

The protein belongs to the cytochrome c oxidase subunit 2 family. As to quaternary structure, component of the cytochrome c oxidase (complex IV, CIV), a multisubunit enzyme composed of a catalytic core of 3 subunits and several supernumerary subunits. The complex exists as a monomer or a dimer and forms supercomplexes (SCs) in the inner mitochondrial membrane with ubiquinol-cytochrome c oxidoreductase (cytochrome b-c1 complex, complex III, CIII). The cofactor is Cu cation.

It localises to the mitochondrion inner membrane. It catalyses the reaction 4 Fe(II)-[cytochrome c] + O2 + 8 H(+)(in) = 4 Fe(III)-[cytochrome c] + 2 H2O + 4 H(+)(out). Its function is as follows. Component of the cytochrome c oxidase, the last enzyme in the mitochondrial electron transport chain which drives oxidative phosphorylation. The respiratory chain contains 3 multisubunit complexes succinate dehydrogenase (complex II, CII), ubiquinol-cytochrome c oxidoreductase (cytochrome b-c1 complex, complex III, CIII) and cytochrome c oxidase (complex IV, CIV), that cooperate to transfer electrons derived from NADH and succinate to molecular oxygen, creating an electrochemical gradient over the inner membrane that drives transmembrane transport and the ATP synthase. Cytochrome c oxidase is the component of the respiratory chain that catalyzes the reduction of oxygen to water. Electrons originating from reduced cytochrome c in the intermembrane space (IMS) are transferred via the dinuclear copper A center (CU(A)) of subunit 2 and heme A of subunit 1 to the active site in subunit 1, a binuclear center (BNC) formed by heme A3 and copper B (CU(B)). The BNC reduces molecular oxygen to 2 water molecules using 4 electrons from cytochrome c in the IMS and 4 protons from the mitochondrial matrix. The protein is Cytochrome c oxidase subunit 2 (COII) of Schistocerca gregaria (Desert locust).